The chain runs to 467 residues: Abscisic acid 8'-hydroxylase 1 (467 aa).

The helical transmembrane segment at 5–24 (ALFLTLFAGSLFLYFLRCLI) threads the bilayer. Cys411 contacts heme.

Belongs to the cytochrome P450 family. It depends on heme as a cofactor. Mainly expressed in flowers, siliques, roots and stems. Lower expression in rosette leaves and dry seeds. Expressed in vascular tissues of embryo during the seed development.

It is found in the membrane. It carries out the reaction 2-cis-(+)-abscisate + reduced [NADPH--hemoprotein reductase] + O2 = (+)-8'-hydroxyabscisate + oxidized [NADPH--hemoprotein reductase] + H2O + H(+). It participates in plant hormone degradation; abscisic acid degradation. In terms of biological role, involved in the oxidative degradation of abscisic acid. Plays an important role in determining abscisic acid levels in dry seeds and in the control of postgermination growth. The polypeptide is Abscisic acid 8'-hydroxylase 1 (CYP707A1) (Arabidopsis thaliana (Mouse-ear cress)).